Here is a 496-residue protein sequence, read N- to C-terminus: Cobyric acid synthase (496 aa).

The GATase cobBQ-type domain occupies 250–437 (TLKVIAPALP…LHGLFESPQA (188 aa)). The Nucleophile role is filled by C331. The active site involves H429.

The protein belongs to the CobB/CobQ family. CobQ subfamily.

It participates in cofactor biosynthesis; adenosylcobalamin biosynthesis. Its function is as follows. Catalyzes amidations at positions B, D, E, and G on adenosylcobyrinic A,C-diamide. NH(2) groups are provided by glutamine, and one molecule of ATP is hydrogenolyzed for each amidation. The chain is Cobyric acid synthase from Hahella chejuensis (strain KCTC 2396).